We begin with the raw amino-acid sequence, 301 residues long: N-carbamoylputrescine amidase (301 aa).

The region spanning Val11 to Leu269 is the CN hydrolase domain. Residue Glu50 is the Proton acceptor of the active site. Residue Lys123 is the Proton donor of the active site. The active-site Nucleophile is the Cys160.

The protein belongs to the carbon-nitrogen hydrolase superfamily. Homooctamer.

The enzyme catalyses N-carbamoylputrescine + H2O + 2 H(+) = putrescine + NH4(+) + CO2. It participates in amine and polyamine biosynthesis; putrescine biosynthesis via agmatine pathway; putrescine from N-carbamoylputrescine (amidase route): step 1/1. In terms of biological role, involved in polyamine biosynthesis. The sequence is that of N-carbamoylputrescine amidase (CPA) from Oryza sativa subsp. japonica (Rice).